Reading from the N-terminus, the 53-residue chain is Large ribosomal subunit protein bL33A (53 aa).

This sequence belongs to the bacterial ribosomal protein bL33 family.

In Mycoplasma genitalium (strain ATCC 33530 / DSM 19775 / NCTC 10195 / G37) (Mycoplasmoides genitalium), this protein is Large ribosomal subunit protein bL33A (rpmG1).